A 933-amino-acid polypeptide reads, in one-letter code: DNA repair-scaffolding protein (933 aa).

Disordered regions lie at residues 1 to 34 (MSGA…LRRG), 67 to 174 (SEKT…KGTL), and 205 to 224 (YSSD…IDSE). Composition is skewed to basic and acidic residues over residues 16–29 (WHIE…ERSQ), 71–87 (GITE…KTET), and 119–132 (RDGR…RLGD). Acidic residues predominate over residues 138 to 148 (PEDEDIEDELQ). The segment at 175–469 (DISDCDSCAS…GTGWTHGHEK (295 aa)) is necessary for interaction with RAD51. Residues 214 to 224 (DPEHSLFIDSE) are compositionally biased toward basic and acidic residues.

As to quaternary structure, found in a complex, at least composed of BLM, RAD51 and SPIDR; the complex formation is mediated by SPIDR. Interacts (via C-terminal region) with BLM; the interaction is direct. Interacts with RAD51; the interaction is direct. Interacts (via the C-terminal region) with FIGNL1 (via N-terminal one-half region); the interaction is direct.

It is found in the nucleus. Its function is as follows. Plays a role in DNA double-strand break (DBS) repair via homologous recombination (HR). Serves as a scaffolding protein that helps to promote the recruitment of DNA-processing enzymes like the helicase BLM and recombinase RAD51 to site of DNA damage, and hence contributes to maintain genomic integrity. In Mus musculus (Mouse), this protein is DNA repair-scaffolding protein (Spidr).